Reading from the N-terminus, the 861-residue chain is Origin recognition complex subunit 1 (861 aa).

The region spanning 45-171 is the BAH domain; the sequence is IHIQIGQFVL…EKKFRPLSSE (127 aa). The disordered stretch occupies residues 183–233; that stretch reads AAKCQKPVRAKSKSAESPSWTPAEHVAKRIESRHSASKSRQTPTHPLTPRA. Serine 199 is modified (phosphoserine). Threonine 203 carries the post-translational modification Phosphothreonine. Residues 207 to 216 show a composition bias toward basic and acidic residues; the sequence is HVAKRIESRH. Phosphoserine occurs at positions 252, 255, 273, and 287. The segment at 269 to 312 is disordered; the sequence is SEITSPSKRSQPDKLQTLSPALKAPEKTRETGLSYTEDDKKASP. The span at 270–287 shows a compositional bias: polar residues; that stretch reads EITSPSKRSQPDKLQTLS. Lysine 326 bears the N6-acetyllysine mark. The residue at position 337 (threonine 337) is a Phosphothreonine. Serine 340 carries the post-translational modification Phosphoserine. 2 disordered regions span residues 360–382 and 412–476; these read KRDA…IRRK and PAAE…QIRS. Serine 417 and serine 420 each carry phosphoserine. The span at 440 to 456 shows a compositional bias: low complexity; the sequence is SRNLRSSLKSSLHTLTK. The segment covering 457–466 has biased composition (basic residues); sequence VPKKSLKPRT. Residue serine 478 is modified to Phosphoserine. ATP is bound by residues valine 500 and 534-542; that span reads GVPGTGKTA. The interval 501-861 is necessary and sufficient for ORC complex assembly; the sequence is PESLPCREQE…DDVLYALKDE (361 aa). Residues aspartate 620 and glutamate 621 each coordinate Mg(2+). Positions 621, 654, and 720 each coordinate ATP.

The protein belongs to the ORC1 family. As to quaternary structure, component of ORC, a complex composed of at least 6 subunits: ORC1, ORC2, ORC3, ORC4, ORC5 and ORC6. ORC is regulated in a cell-cycle dependent manner. It is sequentially assembled at the exit from anaphase of mitosis and disassembled as cells enter S phase. Interacts with CDC6 and KAT7/HBO1. Interacts with LRWD1 predominantly during the G1 phase and with less affinity during mitosis, when phosphorylated. In terms of processing, phosphorylated during mitosis.

Its subcellular location is the nucleus. In terms of biological role, component of the origin recognition complex (ORC) that binds origins of replication. DNA-binding is ATP-dependent. The DNA sequences that define origins of replication have not been identified yet. ORC is required to assemble the pre-replication complex necessary to initiate DNA replication. This Homo sapiens (Human) protein is Origin recognition complex subunit 1 (ORC1).